The sequence spans 67 residues: Peptide Hp1036 (67 aa).

The signal sequence occupies residues 1–23 (MKTQFAILLITLVLFQMFSQSDA). Phenylalanine 36 is subject to Phenylalanine amide. Positions 40 to 67 (GLNDLSDLDELFDGEISEADVDFLREIM) are excised as a propeptide.

This sequence belongs to the non-disulfide-bridged peptide (NDBP) superfamily. Short antimicrobial peptide (group 4) family. In terms of tissue distribution, expressed by the venom gland.

The protein resides in the secreted. It is found in the target cell membrane. Functionally, amphipathic peptide with antibacterial activities. Shows antiviral activities against the herpes simplex virus type-1. It potently inhibits the initial infection by provoking the rupture of viral envelop and the dissociation of proteins from the virions (EC(50) is 0.43 uM). It also effectively inhibits viral attachment (EC(50) is 2.87 uM), viral entry (EC(50) is 4.29 uM) and viral proliferation after infection (EC(50) is 7.86). Morever, it enters mammalian tested cells (Vero) and reduces the intracellular infectivity. The polypeptide is Peptide Hp1036 (Heterometrus petersii (Asian forest scorpion)).